We begin with the raw amino-acid sequence, 236 residues long: Small ribosomal subunit protein uS2c (236 aa).

It belongs to the universal ribosomal protein uS2 family.

The protein resides in the plastid. The protein localises to the chloroplast. In Platanus occidentalis (Sycamore), this protein is Small ribosomal subunit protein uS2c (rps2).